The chain runs to 341 residues: Anthranilate phosphoribosyltransferase (341 aa).

Residues Gly-79, 82–83, Thr-87, 89–92, 107–115, and Ser-119 contribute to the 5-phospho-alpha-D-ribose 1-diphosphate site; these read GD, NIST, and KHGNRAVSS. An anthranilate-binding site is contributed by Gly-79. Ser-91 is a Mg(2+) binding site. Asn-110 serves as a coordination point for anthranilate. Arg-165 contacts anthranilate. 2 residues coordinate Mg(2+): Asp-224 and Glu-225.

Belongs to the anthranilate phosphoribosyltransferase family. As to quaternary structure, homodimer. Requires Mg(2+) as cofactor.

The catalysed reaction is N-(5-phospho-beta-D-ribosyl)anthranilate + diphosphate = 5-phospho-alpha-D-ribose 1-diphosphate + anthranilate. It functions in the pathway amino-acid biosynthesis; L-tryptophan biosynthesis; L-tryptophan from chorismate: step 2/5. In terms of biological role, catalyzes the transfer of the phosphoribosyl group of 5-phosphorylribose-1-pyrophosphate (PRPP) to anthranilate to yield N-(5'-phosphoribosyl)-anthranilate (PRA). This is Anthranilate phosphoribosyltransferase from Bacillus cereus (strain G9842).